Here is a 365-residue protein sequence, read N- to C-terminus: Ribosomal RNA large subunit methyltransferase F (365 aa).

2 stretches are compositionally biased toward low complexity: residues 1–18 and 30–42; these read MPKP…SPAG and AKLK…AASK. Positions 1–50 are disordered; it reads MPKPAIKTAAKPATSPAGKRAKPNTPQSVAKLKASTAKAASKPKAKLGEK.

The protein belongs to the methyltransferase superfamily. METTL16/RlmF family.

It localises to the cytoplasm. The catalysed reaction is adenosine(1618) in 23S rRNA + S-adenosyl-L-methionine = N(6)-methyladenosine(1618) in 23S rRNA + S-adenosyl-L-homocysteine + H(+). Its function is as follows. Specifically methylates the adenine in position 1618 of 23S rRNA. The chain is Ribosomal RNA large subunit methyltransferase F from Shewanella oneidensis (strain ATCC 700550 / JCM 31522 / CIP 106686 / LMG 19005 / NCIMB 14063 / MR-1).